A 440-amino-acid polypeptide reads, in one-letter code: Chromosome partition protein MukF (440 aa).

Positions L208–I236 are leucine-zipper.

This sequence belongs to the MukF family. In terms of assembly, interacts, and probably forms a ternary complex, with MukE and MukB via its C-terminal region. The complex formation is stimulated by calcium or magnesium. It is required for an interaction between MukE and MukB.

The protein localises to the cytoplasm. It is found in the nucleoid. In terms of biological role, involved in chromosome condensation, segregation and cell cycle progression. May participate in facilitating chromosome segregation by condensation DNA from both sides of a centrally located replisome during cell division. Not required for mini-F plasmid partitioning. Probably acts via its interaction with MukB and MukE. Overexpression results in anucleate cells. It has a calcium binding activity. The chain is Chromosome partition protein MukF from Salmonella paratyphi B (strain ATCC BAA-1250 / SPB7).